Consider the following 193-residue polypeptide: Signal peptidase I (193 aa).

At 1–25 (MTEEQKPTSEKSVKRKSNTYWEWGK) the chain is on the cytoplasmic side. Residues 26 to 42 (AIIIAVALALLIRHFLF) form a helical membrane-spanning segment. Over 43-193 (EPYLVEGSSM…FPFHDMRQTK (151 aa)) the chain is Extracellular. Residues serine 51 and lysine 93 contribute to the active site.

It belongs to the peptidase S26 family.

The protein resides in the cell membrane. The catalysed reaction is Cleavage of hydrophobic, N-terminal signal or leader sequences from secreted and periplasmic proteins.. The sequence is that of Signal peptidase I (sipS2) from Bacillus amyloliquefaciens (Bacillus velezensis).